Reading from the N-terminus, the 151-residue chain is Phosphoribosyl-AMP cyclohydrolase (151 aa).

The segment covering 1–13 has biased composition (polar residues); that stretch reads MMTLTFASPPQNK. A disordered region spans residues 1 to 20; sequence MMTLTFASPPQNKSDLETGP. Residue Asp-93 coordinates Mg(2+). Residue Cys-94 participates in Zn(2+) binding. Mg(2+)-binding residues include Asp-95 and Asp-97. Zn(2+) contacts are provided by Cys-112 and Cys-119.

This sequence belongs to the PRA-CH family. Homodimer. Mg(2+) serves as cofactor. Requires Zn(2+) as cofactor.

It localises to the cytoplasm. It carries out the reaction 1-(5-phospho-beta-D-ribosyl)-5'-AMP + H2O = 1-(5-phospho-beta-D-ribosyl)-5-[(5-phospho-beta-D-ribosylamino)methylideneamino]imidazole-4-carboxamide. Its pathway is amino-acid biosynthesis; L-histidine biosynthesis; L-histidine from 5-phospho-alpha-D-ribose 1-diphosphate: step 3/9. Its function is as follows. Catalyzes the hydrolysis of the adenine ring of phosphoribosyl-AMP. This is Phosphoribosyl-AMP cyclohydrolase from Sinorhizobium medicae (strain WSM419) (Ensifer medicae).